Reading from the N-terminus, the 385-residue chain is Ethanolamine kinase 2 (385 aa).

This sequence belongs to the choline/ethanolamine kinase family. As to expression, expressed in testis and liver. Low expression in ovary and kidney.

It catalyses the reaction ethanolamine + ATP = phosphoethanolamine + ADP + H(+). The protein operates within phospholipid metabolism; phosphatidylethanolamine biosynthesis; phosphatidylethanolamine from ethanolamine: step 1/3. Its function is as follows. Highly specific for ethanolamine phosphorylation. Does not have choline kinase activity. The protein is Ethanolamine kinase 2 (Etnk2) of Mus musculus (Mouse).